Here is a 211-residue protein sequence, read N- to C-terminus: Pyruvate dehydrogenase E1 component subunit beta, mitochondrial (211 aa).

Tyrosine 31 is modified (phosphotyrosine). K(+)-binding residues include isoleucine 48, alanine 96, isoleucine 97, aspartate 99, and asparagine 101.

As to quaternary structure, heterotetramer of two PDHA1 and two PDHB subunits. The heterotetramer interacts with DLAT, and is part of the multimeric pyruvate dehydrogenase complex that contains multiple copies of pyruvate dehydrogenase (E1), dihydrolipoamide acetyltransferase (DLAT, E2) and lipoamide dehydrogenase (DLD, E3). These subunits are bound to an inner core composed of about 48 DLAT and 12 PDHX molecules. Interacts with DLAT. Requires thiamine diphosphate as cofactor.

The protein localises to the mitochondrion matrix. It carries out the reaction N(6)-[(R)-lipoyl]-L-lysyl-[protein] + pyruvate + H(+) = N(6)-[(R)-S(8)-acetyldihydrolipoyl]-L-lysyl-[protein] + CO2. Its function is as follows. The pyruvate dehydrogenase complex catalyzes the overall conversion of pyruvate to acetyl-CoA and CO(2), and thereby links the glycolytic pathway to the tricarboxylic cycle. This Mesocricetus auratus (Golden hamster) protein is Pyruvate dehydrogenase E1 component subunit beta, mitochondrial.